A 478-amino-acid chain; its full sequence is MAKVTDFKVADLSLAEAGRHQIRLAEYEMPGLMQLRREYAEEQPLKGARIAGSIHMTVQTAVLIETLTALGAEVRWASCNIFSTQDEAAAAIVVGDGTPEDPQGVPVFAWKGETLDEYWWCINQIFSWEGELPNMILDDGGDATMAVIRGREYEKAGVVPQPEANDSDEYIAFLGMLREVLAEEPDKWTRLADSIKGVTEETTTGVHRLYHFAEEGVLPFPAMNVNDAVTKSKFDNKYGTRHSLIDGINRATDMLMGGKNVLVCGYGDVGKGCAEAFDGQGARVRVTEADPINALQALMDGYSVVTVDEAIADADIVITATGNKDIISYEQMLKMKDHALLGNIGHFDNEIDMHSLLHRDDVIRTTIKPQVDEFTFPNGKSIIVLSEGRLLNLGNATGHPSFVMSTSFADQTIAQIELFQNEGQYENQVYRLPKILDEKVARIHVEALGGKLTELTKEQAEYIGVDVAGPFKPEHYRY.

Substrate is bound by residues Thr57, Asp139, and Glu201. 202-204 (TTT) serves as a coordination point for NAD(+). 2 residues coordinate substrate: Lys231 and Asp235. Residues Asn236, 265-270 (GYGDVG), Glu288, Asn323, 344-346 (IGH), and Asn392 contribute to the NAD(+) site.

It belongs to the adenosylhomocysteinase family. It depends on NAD(+) as a cofactor.

It is found in the cytoplasm. It carries out the reaction S-adenosyl-L-homocysteine + H2O = L-homocysteine + adenosine. Its pathway is amino-acid biosynthesis; L-homocysteine biosynthesis; L-homocysteine from S-adenosyl-L-homocysteine: step 1/1. Functionally, may play a key role in the regulation of the intracellular concentration of adenosylhomocysteine. This chain is Adenosylhomocysteinase, found in Corynebacterium efficiens (strain DSM 44549 / YS-314 / AJ 12310 / JCM 11189 / NBRC 100395).